Here is a 249-residue protein sequence, read N- to C-terminus: 3-deoxy-manno-octulosonate cytidylyltransferase (249 aa).

It belongs to the KdsB family.

The protein localises to the cytoplasm. The enzyme catalyses 3-deoxy-alpha-D-manno-oct-2-ulosonate + CTP = CMP-3-deoxy-beta-D-manno-octulosonate + diphosphate. The protein operates within nucleotide-sugar biosynthesis; CMP-3-deoxy-D-manno-octulosonate biosynthesis; CMP-3-deoxy-D-manno-octulosonate from 3-deoxy-D-manno-octulosonate and CTP: step 1/1. Its pathway is bacterial outer membrane biogenesis; lipopolysaccharide biosynthesis. Functionally, activates KDO (a required 8-carbon sugar) for incorporation into bacterial lipopolysaccharide in Gram-negative bacteria. The sequence is that of 3-deoxy-manno-octulosonate cytidylyltransferase from Coxiella burnetii (strain RSA 331 / Henzerling II).